Consider the following 543-residue polypeptide: Light-independent protochlorophyllide reductase subunit B (543 aa).

Aspartate 36 provides a ligand contact to [4Fe-4S] cluster. Residue aspartate 287 is the Proton donor of the active site. 422–423 (GL) is a binding site for substrate.

It belongs to the ChlB/BchB/BchZ family. In terms of assembly, protochlorophyllide reductase is composed of three subunits; BchL, BchN and BchB. Forms a heterotetramer of two BchB and two BchN subunits. It depends on [4Fe-4S] cluster as a cofactor.

The catalysed reaction is chlorophyllide a + oxidized 2[4Fe-4S]-[ferredoxin] + 2 ADP + 2 phosphate = protochlorophyllide a + reduced 2[4Fe-4S]-[ferredoxin] + 2 ATP + 2 H2O. It functions in the pathway porphyrin-containing compound metabolism; bacteriochlorophyll biosynthesis (light-independent). Functionally, component of the dark-operative protochlorophyllide reductase (DPOR) that uses Mg-ATP and reduced ferredoxin to reduce ring D of protochlorophyllide (Pchlide) to form chlorophyllide a (Chlide). This reaction is light-independent. The NB-protein (BchN-BchB) is the catalytic component of the complex. The polypeptide is Light-independent protochlorophyllide reductase subunit B (Rubrivivax gelatinosus (strain NBRC 100245 / IL144)).